A 280-amino-acid chain; its full sequence is 2-dehydro-3-deoxyphosphooctonate aldolase (280 aa).

Belongs to the KdsA family.

Its subcellular location is the cytoplasm. It catalyses the reaction D-arabinose 5-phosphate + phosphoenolpyruvate + H2O = 3-deoxy-alpha-D-manno-2-octulosonate-8-phosphate + phosphate. It functions in the pathway carbohydrate biosynthesis; 3-deoxy-D-manno-octulosonate biosynthesis; 3-deoxy-D-manno-octulosonate from D-ribulose 5-phosphate: step 2/3. Its pathway is bacterial outer membrane biogenesis; lipopolysaccharide biosynthesis. This chain is 2-dehydro-3-deoxyphosphooctonate aldolase, found in Neisseria gonorrhoeae (strain NCCP11945).